A 436-amino-acid polypeptide reads, in one-letter code: Serine--tRNA ligase (436 aa).

Basic and acidic residues predominate over residues 43-55; sequence TKSEQLKQKRNEV. Positions 43-68 are disordered; the sequence is TKSEQLKQKRNEVSDQIAQAKRNKED. 237-239 serves as a coordination point for L-serine; that stretch reads TAE. 268 to 270 contacts ATP; sequence RSE. L-serine is bound at residue glutamate 291. 355–358 serves as a coordination point for ATP; the sequence is EISS. Serine 390 is a binding site for L-serine.

The protein belongs to the class-II aminoacyl-tRNA synthetase family. Type-1 seryl-tRNA synthetase subfamily. As to quaternary structure, homodimer. The tRNA molecule binds across the dimer.

The protein resides in the cytoplasm. The catalysed reaction is tRNA(Ser) + L-serine + ATP = L-seryl-tRNA(Ser) + AMP + diphosphate + H(+). It carries out the reaction tRNA(Sec) + L-serine + ATP = L-seryl-tRNA(Sec) + AMP + diphosphate + H(+). The protein operates within aminoacyl-tRNA biosynthesis; selenocysteinyl-tRNA(Sec) biosynthesis; L-seryl-tRNA(Sec) from L-serine and tRNA(Sec): step 1/1. Its function is as follows. Catalyzes the attachment of serine to tRNA(Ser). Is also able to aminoacylate tRNA(Sec) with serine, to form the misacylated tRNA L-seryl-tRNA(Sec), which will be further converted into selenocysteinyl-tRNA(Sec). This Lactobacillus johnsonii (strain CNCM I-12250 / La1 / NCC 533) protein is Serine--tRNA ligase.